The following is a 440-amino-acid chain: C-terminal-binding protein 1 (440 aa).

NAD(+) contacts are provided by residues serine 100, isoleucine 180–valine 185, aspartate 204, cysteine 237–asparagine 243, threonine 264–arginine 266, and aspartate 290. Arginine 266 is an active-site residue. Glutamate 295 is a catalytic residue. Histidine 315 acts as the Proton donor in catalysis. Residue histidine 315–tryptophan 318 coordinates NAD(+). Residues histidine 409–leucine 440 are disordered. The segment covering proline 429–leucine 440 has biased composition (basic and acidic residues).

This sequence belongs to the D-isomer specific 2-hydroxyacid dehydrogenase family. It depends on NAD(+) as a cofactor.

Its subcellular location is the nucleus. Its function is as follows. Corepressor targeting diverse transcription regulators. Has dehydrogenase activity. The sequence is that of C-terminal-binding protein 1 (ctbp1) from Xenopus laevis (African clawed frog).